The sequence spans 423 residues: uncharacterized protein (423 aa).

Ser-51, Asp-138, and Asn-150 together coordinate substrate. ATP-binding positions include 170 to 171 (TD) and 214 to 220 (TGGMRTK). One can recognise a PUA domain in the interval 315–406 (KGAIIIDENS…EKIHDVLGYS (92 aa)).

It belongs to the glutamate 5-kinase family.

It localises to the cytoplasm. This is an uncharacterized protein from Saccharomyces cerevisiae (strain ATCC 204508 / S288c) (Baker's yeast).